Consider the following 40-residue polypeptide: Adenylate kinase (40 aa).

Residue 10–15 (GAGKGT) coordinates ATP. An NMP region spans residues 30–40 (STGDMFIKAIK). Threonine 31 is a binding site for AMP.

It belongs to the adenylate kinase family. In terms of assembly, monomer.

The protein resides in the cytoplasm. It carries out the reaction AMP + ATP = 2 ADP. It participates in purine metabolism; AMP biosynthesis via salvage pathway; AMP from ADP: step 1/1. Catalyzes the reversible transfer of the terminal phosphate group between ATP and AMP. Plays an important role in cellular energy homeostasis and in adenine nucleotide metabolism. In Staphylococcus carnosus, this protein is Adenylate kinase (adk).